A 99-amino-acid chain; its full sequence is MQITVEFSGGLETAFDGNKKHVLDVPEGSSVNWLLHHMVETLMPDHKREEGKNIFLQDESVRPGVLVLINDSDWELEGEDQYILQPRDVIIFASTLHGG.

1-thioglycine is present on G99. G99 is covalently cross-linked (Glycyl lysine isopeptide (Gly-Lys) (interchain with K-? in acceptor proteins)).

It belongs to the URM1 family. In terms of processing, C-terminal thiocarboxylation occurs in 2 steps, it is first acyl-adenylated (-COAMP) via the hesA/moeB/thiF part of UBA4, then thiocarboxylated (-COSH) via the rhodanese domain of UBA4.

The protein resides in the cytoplasm. The protein operates within tRNA modification; 5-methoxycarbonylmethyl-2-thiouridine-tRNA biosynthesis. Acts as a sulfur carrier required for 2-thiolation of mcm(5)S(2)U at tRNA wobble positions of cytosolic tRNA(Lys), tRNA(Glu) and tRNA(Gln). Serves as sulfur donor in tRNA 2-thiolation reaction by being thiocarboxylated (-COSH) at its C-terminus by the MOCS3 homolog UBA4. The sulfur is then transferred to tRNA to form 2-thiolation of mcm(5)S(2)U. Prior mcm(5) tRNA modification by the elongator complex is required for 2-thiolation. Also acts as a ubiquitin-like protein (UBL) that is covalently conjugated via an isopeptide bond to lysine residues of target proteins such as AHP1. The thiocarboxylated form serves as substrate for conjugation and oxidative stress specifically induces the formation of UBL-protein conjugates. In Yarrowia lipolytica (strain CLIB 122 / E 150) (Yeast), this protein is Ubiquitin-related modifier 1.